The primary structure comprises 264 residues: Isoprenyl transferase (264 aa).

Residue aspartate 43 is part of the active site. Aspartate 43 is a binding site for Mg(2+). Substrate is bound by residues 44 to 47 (GNGR), tryptophan 48, arginine 56, histidine 60, and 88 to 90 (STE). The active-site Proton acceptor is the asparagine 91. Substrate contacts are provided by residues tryptophan 92, arginine 94, arginine 211, and 217–219 (RTS). Glutamate 230 is a binding site for Mg(2+).

This sequence belongs to the UPP synthase family. In terms of assembly, homodimer. Mg(2+) is required as a cofactor.

Its function is as follows. Catalyzes the condensation of isopentenyl diphosphate (IPP) with allylic pyrophosphates generating different type of terpenoids. The chain is Isoprenyl transferase from Bifidobacterium longum (strain NCC 2705).